The following is a 295-amino-acid chain: 33 kDa chaperonin (295 aa).

2 disulfide bridges follow: Cys236–Cys238 and Cys269–Cys272.

The protein belongs to the HSP33 family. Under oxidizing conditions two disulfide bonds are formed involving the reactive cysteines. Under reducing conditions zinc is bound to the reactive cysteines and the protein is inactive.

The protein resides in the cytoplasm. Functionally, redox regulated molecular chaperone. Protects both thermally unfolding and oxidatively damaged proteins from irreversible aggregation. Plays an important role in the bacterial defense system toward oxidative stress. In Citrifermentans bemidjiense (strain ATCC BAA-1014 / DSM 16622 / JCM 12645 / Bem) (Geobacter bemidjiensis), this protein is 33 kDa chaperonin.